The chain runs to 209 residues: Ribosomal RNA large subunit methyltransferase E (209 aa).

S-adenosyl-L-methionine contacts are provided by Gly63, Trp65, Asp83, Asp99, and Asp124. Lys164 serves as the catalytic Proton acceptor.

This sequence belongs to the class I-like SAM-binding methyltransferase superfamily. RNA methyltransferase RlmE family.

Its subcellular location is the cytoplasm. It catalyses the reaction uridine(2552) in 23S rRNA + S-adenosyl-L-methionine = 2'-O-methyluridine(2552) in 23S rRNA + S-adenosyl-L-homocysteine + H(+). Its function is as follows. Specifically methylates the uridine in position 2552 of 23S rRNA at the 2'-O position of the ribose in the fully assembled 50S ribosomal subunit. This Aeromonas hydrophila subsp. hydrophila (strain ATCC 7966 / DSM 30187 / BCRC 13018 / CCUG 14551 / JCM 1027 / KCTC 2358 / NCIMB 9240 / NCTC 8049) protein is Ribosomal RNA large subunit methyltransferase E.